The chain runs to 887 residues: Probable dual specificity protein kinase madd-3 (887 aa).

Disordered regions lie at residues 77-147 (PIKS…ISAA), 163-299 (AQPP…PKAL), 313-333 (LPQS…STGG), 347-475 (TTIC…KSAA), and 504-533 (RKPS…QHQD). Residues 108-118 (PTQNPVQLPLP) are compositionally biased toward low complexity. Residues 121–130 (VSEKPGDKKS) show a composition bias toward basic and acidic residues. Polar residues predominate over residues 177–192 (SETNSGSGPVSKQVSG). The span at 217–241 (SSASTRAKAASAVAPEANPAPVPTA) shows a compositional bias: low complexity. Polar residues-rich tracts occupy residues 314-332 (PQSS…TSTG) and 356-366 (NVPSTSQPQQG). Basic and acidic residues predominate over residues 367-377 (DNEKRLIEKKL). The segment covering 407–419 (LSSNLTTTNNNNN) has biased composition (low complexity). Residues 439–462 (FSTQAGSGNATTVDDPASTTTSKE) show a composition bias toward polar residues. Residues 551–863 (FTIYDTLGEG…LPEALQHRYF (313 aa)) form the Protein kinase domain. ATP contacts are provided by residues 557 to 565 (LGEGTFGKV) and lysine 580. The active-site Proton acceptor is aspartate 677.

The protein belongs to the protein kinase superfamily. CMGC Ser/Thr protein kinase family. Lammer subfamily. In terms of tissue distribution, expressed in body wall, vulval and anal depressor muscles.

The protein resides in the cytoplasm. Its subcellular location is the nucleus. Functionally, probable dual specificity kinase acting on both serine/threonine and tyrosine-containing substrates. Negatively regulates p38 MAPK signaling to allow for the plasma membrane of body wall muscle cells to form projections, also called muscle arms, that extend and connect the body wall muscles to target motor neurons. Negative regulation of p38 MAPK signaling may in turn modulate the trafficking of the muscle specific receptor eva-1 to the lysosome, to ensure proper display of the eva-1 receptor on the plasma membrane of muscle cells and allow for muscle arm extension towards guidance cues. The sequence is that of Probable dual specificity protein kinase madd-3 from Caenorhabditis elegans.